A 167-amino-acid chain; its full sequence is Probable chemoreceptor glutamine deamidase CheD (167 aa).

The protein belongs to the CheD family.

It catalyses the reaction L-glutaminyl-[protein] + H2O = L-glutamyl-[protein] + NH4(+). Its function is as follows. Probably deamidates glutamine residues to glutamate on methyl-accepting chemotaxis receptors (MCPs), playing an important role in chemotaxis. In Natronomonas pharaonis (strain ATCC 35678 / DSM 2160 / CIP 103997 / JCM 8858 / NBRC 14720 / NCIMB 2260 / Gabara) (Halobacterium pharaonis), this protein is Probable chemoreceptor glutamine deamidase CheD.